The following is a 467-amino-acid chain: Pachytene checkpoint protein 2 homolog (467 aa).

209 to 216 (GPPGTGKT) is an ATP binding site.

It belongs to the AAA ATPase family. PCH2 subfamily.

It localises to the chromosome. Its function is as follows. Plays a key role in chromosome recombination during meiosis. Mediates meiotic chromosome remodeling and crossover maturation. The sequence is that of Pachytene checkpoint protein 2 homolog from Arabidopsis thaliana (Mouse-ear cress).